A 325-amino-acid chain; its full sequence is NADH-quinone oxidoreductase subunit H (325 aa).

8 helical membrane passes run 11–31 (VIIA…CGAF), 81–101 (VIFT…MAIV), 114–134 (IGLL…LFAG), 154–174 (LSYE…AGSF), 186–206 (LWNV…GVAV), 237–257 (FFVG…TLFF), 265–285 (LPPV…FILI), and 304–324 (VCLP…LYTA).

This sequence belongs to the complex I subunit 1 family. As to quaternary structure, NDH-1 is composed of 13 different subunits. Subunits NuoA, H, J, K, L, M, N constitute the membrane sector of the complex.

It localises to the cell inner membrane. It carries out the reaction a quinone + NADH + 5 H(+)(in) = a quinol + NAD(+) + 4 H(+)(out). Functionally, NDH-1 shuttles electrons from NADH, via FMN and iron-sulfur (Fe-S) centers, to quinones in the respiratory chain. The immediate electron acceptor for the enzyme in this species is believed to be ubiquinone. Couples the redox reaction to proton translocation (for every two electrons transferred, four hydrogen ions are translocated across the cytoplasmic membrane), and thus conserves the redox energy in a proton gradient. This subunit may bind ubiquinone. The chain is NADH-quinone oxidoreductase subunit H from Erwinia tasmaniensis (strain DSM 17950 / CFBP 7177 / CIP 109463 / NCPPB 4357 / Et1/99).